The primary structure comprises 261 residues: Triosephosphate isomerase (261 aa).

Substrate is bound at residue 10–12 (NWK). His100 serves as the catalytic Electrophile. Glu172 acts as the Proton acceptor in catalysis. Substrate-binding positions include Gly178, Ser218, and 239 to 240 (GG).

The protein belongs to the triosephosphate isomerase family. As to quaternary structure, homodimer.

It is found in the cytoplasm. The enzyme catalyses D-glyceraldehyde 3-phosphate = dihydroxyacetone phosphate. The protein operates within carbohydrate biosynthesis; gluconeogenesis. It participates in carbohydrate degradation; glycolysis; D-glyceraldehyde 3-phosphate from glycerone phosphate: step 1/1. Its function is as follows. Involved in the gluconeogenesis. Catalyzes stereospecifically the conversion of dihydroxyacetone phosphate (DHAP) to D-glyceraldehyde-3-phosphate (G3P). This Nocardia farcinica (strain IFM 10152) protein is Triosephosphate isomerase.